We begin with the raw amino-acid sequence, 502 residues long: Pyruvate kinase (502 aa).

Arginine 54 contributes to the substrate binding site. Positions 56, 58, 88, and 89 each coordinate K(+). 56–59 (NFSH) contacts ATP. Residues arginine 95 and lysine 184 each contribute to the ATP site. Residue glutamate 252 participates in Mg(2+) binding. 3 residues coordinate substrate: glycine 275, aspartate 276, and threonine 308. Position 276 (aspartate 276) interacts with Mg(2+).

This sequence belongs to the pyruvate kinase family. In terms of assembly, homotetramer. The cofactor is Mg(2+). K(+) serves as cofactor.

The catalysed reaction is pyruvate + ATP = phosphoenolpyruvate + ADP + H(+). It functions in the pathway carbohydrate degradation; glycolysis; pyruvate from D-glyceraldehyde 3-phosphate: step 5/5. Regulated by phosphoenolpyruvate substrate and is allosterically activated by ribose-5-phosphate, AMP and other nucleoside monophosphates but not by fructose-1,6-bisphosphate. The protein is Pyruvate kinase (pyk) of Lactococcus lactis subsp. lactis (strain IL1403) (Streptococcus lactis).